Reading from the N-terminus, the 530-residue chain is Phosphoenolpyruvate carboxykinase (ATP) (530 aa).

Residues Arg58, Tyr195, and Lys201 each contribute to the substrate site. ATP-binding positions include Lys201, His220, and 236-244 (GLSGTGKTT). Positions 201 and 220 each coordinate Mn(2+). Asp257 is a Mn(2+) binding site. ATP-binding positions include Glu285, Arg321, 440–441 (RI), and Thr446. Arg321 contacts substrate.

Belongs to the phosphoenolpyruvate carboxykinase (ATP) family. The cofactor is Mn(2+).

It localises to the cytoplasm. It carries out the reaction oxaloacetate + ATP = phosphoenolpyruvate + ADP + CO2. The protein operates within carbohydrate biosynthesis; gluconeogenesis. In terms of biological role, involved in the gluconeogenesis. Catalyzes the conversion of oxaloacetate (OAA) to phosphoenolpyruvate (PEP) through direct phosphoryl transfer between the nucleoside triphosphate and OAA. The protein is Phosphoenolpyruvate carboxykinase (ATP) of Staphylococcus haemolyticus (strain JCSC1435).